A 689-amino-acid polypeptide reads, in one-letter code: Armadillo-like helical domain-containing protein 3 (689 aa).

The chain crosses the membrane as a helical span at residues 520–538 (IFTLALMIVNLFNMFITYG).

The protein belongs to the ARMH3 family. Interacts with PI4KB. Interacts with GBF1.

The protein resides in the golgi apparatus membrane. It localises to the cytoplasm. Functionally, involved in GBF1 recruitment, Golgi maintenance and protein secretion. The sequence is that of Armadillo-like helical domain-containing protein 3 from Homo sapiens (Human).